We begin with the raw amino-acid sequence, 193 residues long: Large ribosomal subunit protein bL12cy (193 aa).

The N-terminal 59 residues, 1 to 59 (MAATTLSIATTIRSSSFSSGLASAHHFPSRPLSIEFPFSFGVSSSSTLSHRAIYLHPIS), are a transit peptide targeting the chloroplast. Over residues 170-187 (GVTKDEAEEDKTQLEEAG) the composition is skewed to basic and acidic residues. The disordered stretch occupies residues 170-193 (GVTKDEAEEDKTQLEEAGAKVSIV).

The protein belongs to the bacterial ribosomal protein bL12 family.

Its subcellular location is the plastid. The protein localises to the chloroplast. The polypeptide is Large ribosomal subunit protein bL12cy (RPL12B) (Arabidopsis thaliana (Mouse-ear cress)).